The primary structure comprises 170 residues: Ribosome maturation factor RimM (170 aa).

The PRC barrel domain maps to 92–163 (KEGWYYFELE…RMDVELPPGL (72 aa)).

It belongs to the RimM family. As to quaternary structure, binds ribosomal protein uS19.

It is found in the cytoplasm. An accessory protein needed during the final step in the assembly of 30S ribosomal subunit, possibly for assembly of the head region. Essential for efficient processing of 16S rRNA. May be needed both before and after RbfA during the maturation of 16S rRNA. It has affinity for free ribosomal 30S subunits but not for 70S ribosomes. In Desulfitobacterium hafniense (strain Y51), this protein is Ribosome maturation factor RimM.